The chain runs to 184 residues: Cytosolic Prostaglandin E synthase (184 aa).

The CS domain occupies 7 to 96; that stretch reads LIPPPVSWAQ…AAGPYWSSLT (90 aa). The disordered stretch occupies residues 115 to 184; it reads ESDDEEGDQK…EGDKEKKPAA (70 aa). 5 positions are modified to phosphoserine: Ser116, Ser127, Ser135, Ser156, and Ser162. Over residues 147–158 the composition is skewed to acidic residues; the sequence is FNVDDEEEDSDD. Residues 175–184 show a composition bias toward basic and acidic residues; the sequence is EGDKEKKPAA.

Belongs to the p23/wos2 family.

The protein localises to the cytoplasm. It catalyses the reaction prostaglandin H2 = prostaglandin E2. In terms of biological role, cytosolic prostaglandin synthase that catalyzes the oxidoreduction of prostaglandin endoperoxide H2 (PGH2) to prostaglandin E2 (PGE2). Through production of PGE2 may regulate the activity of non-muscle myosin II in an autocrine or paracrine fashion; this may influence border cell and nurse cell stiffness to facilitate border cell migration during oogenesis. The sequence is that of Cytosolic Prostaglandin E synthase from Drosophila melanogaster (Fruit fly).